Reading from the N-terminus, the 167-residue chain is NADH-quinone oxidoreductase subunit B 2 (167 aa).

Residues C38, C39, C104, and C133 each coordinate [4Fe-4S] cluster.

The protein belongs to the complex I 20 kDa subunit family. As to quaternary structure, NDH-1 is composed of 14 different subunits. Subunits NuoB, C, D, E, F, and G constitute the peripheral sector of the complex. [4Fe-4S] cluster is required as a cofactor.

The protein resides in the cell membrane. The enzyme catalyses a quinone + NADH + 5 H(+)(in) = a quinol + NAD(+) + 4 H(+)(out). Its function is as follows. NDH-1 shuttles electrons from NADH, via FMN and iron-sulfur (Fe-S) centers, to quinones in the respiratory chain. The immediate electron acceptor for the enzyme in this species is believed to be ubiquinone. Couples the redox reaction to proton translocation (for every two electrons transferred, four hydrogen ions are translocated across the cytoplasmic membrane), and thus conserves the redox energy in a proton gradient. The protein is NADH-quinone oxidoreductase subunit B 2 of Roseiflexus sp. (strain RS-1).